A 72-amino-acid polypeptide reads, in one-letter code: Translation initiation factor IF-1 (72 aa).

Residues 1-72 (MAKEDVIEMQ…SKGRIVFRAR (72 aa)) form the S1-like domain.

This sequence belongs to the IF-1 family. Component of the 30S ribosomal translation pre-initiation complex which assembles on the 30S ribosome in the order IF-2 and IF-3, IF-1 and N-formylmethionyl-tRNA(fMet); mRNA recruitment can occur at any time during PIC assembly.

It localises to the cytoplasm. In terms of biological role, one of the essential components for the initiation of protein synthesis. Stabilizes the binding of IF-2 and IF-3 on the 30S subunit to which N-formylmethionyl-tRNA(fMet) subsequently binds. Helps modulate mRNA selection, yielding the 30S pre-initiation complex (PIC). Upon addition of the 50S ribosomal subunit IF-1, IF-2 and IF-3 are released leaving the mature 70S translation initiation complex. This chain is Translation initiation factor IF-1, found in Vibrio cholerae serotype O1 (strain ATCC 39541 / Classical Ogawa 395 / O395).